The following is a 156-amino-acid chain: MNLNATLIGELIAFTVFVLFCMKFVWPPLNGAIEARQKKIEDGLAASDRAEKDLELAQKKAAEQLKDAKVQAADIIDQAKKRAVLIVDEETVRGQQEREKIIAQGHSEIESERNRVTEELRKQVATLAVVGAQRILEREINQAAHSDIVEKLVAEL.

A helical transmembrane segment spans residues 7–27; sequence LIGELIAFTVFVLFCMKFVWP.

It belongs to the ATPase B chain family. In terms of assembly, F-type ATPases have 2 components, F(1) - the catalytic core - and F(0) - the membrane proton channel. F(1) has five subunits: alpha(3), beta(3), gamma(1), delta(1), epsilon(1). F(0) has three main subunits: a(1), b(2) and c(10-14). The alpha and beta chains form an alternating ring which encloses part of the gamma chain. F(1) is attached to F(0) by a central stalk formed by the gamma and epsilon chains, while a peripheral stalk is formed by the delta and b chains.

It is found in the cell inner membrane. Functionally, f(1)F(0) ATP synthase produces ATP from ADP in the presence of a proton or sodium gradient. F-type ATPases consist of two structural domains, F(1) containing the extramembraneous catalytic core and F(0) containing the membrane proton channel, linked together by a central stalk and a peripheral stalk. During catalysis, ATP synthesis in the catalytic domain of F(1) is coupled via a rotary mechanism of the central stalk subunits to proton translocation. In terms of biological role, component of the F(0) channel, it forms part of the peripheral stalk, linking F(1) to F(0). The polypeptide is ATP synthase subunit b (Pseudoalteromonas translucida (strain TAC 125)).